Here is a 445-residue protein sequence, read N- to C-terminus: tRNA-2-methylthio-N(6)-dimethylallyladenosine synthase (445 aa).

Residues 3–124 (KKLYIKTYGC…LPELISKVVR (122 aa)) form the MTTase N-terminal domain. [4Fe-4S] cluster is bound by residues cysteine 12, cysteine 48, cysteine 87, cysteine 162, cysteine 166, and cysteine 169. A Radical SAM core domain is found at 148–380 (YPQGASSFIS…QQELATQQLA (233 aa)). In terms of domain architecture, TRAM spans 383–445 (QSCVGSTMRV…ALNSLTGEIL (63 aa)).

It belongs to the methylthiotransferase family. MiaB subfamily. In terms of assembly, monomer. Requires [4Fe-4S] cluster as cofactor.

The protein localises to the cytoplasm. It catalyses the reaction N(6)-dimethylallyladenosine(37) in tRNA + (sulfur carrier)-SH + AH2 + 2 S-adenosyl-L-methionine = 2-methylsulfanyl-N(6)-dimethylallyladenosine(37) in tRNA + (sulfur carrier)-H + 5'-deoxyadenosine + L-methionine + A + S-adenosyl-L-homocysteine + 2 H(+). Its function is as follows. Catalyzes the methylthiolation of N6-(dimethylallyl)adenosine (i(6)A), leading to the formation of 2-methylthio-N6-(dimethylallyl)adenosine (ms(2)i(6)A) at position 37 in tRNAs that read codons beginning with uridine. The polypeptide is tRNA-2-methylthio-N(6)-dimethylallyladenosine synthase (Rickettsia prowazekii (strain Madrid E)).